We begin with the raw amino-acid sequence, 144 residues long: Maximins 2/H8 type 2 (144 aa).

The first 18 residues, 1–18 (MNFKYIVAVSFLIASAYA), serve as a signal peptide directing secretion. The propeptide occupies 19-43 (RSEENEIQSLSQRDVLEEESLREIR). Asn70 bears the Asparagine amide mark. Positions 74-123 (TAEEHEVMKRLETVMRDLDSLDYPEEASERETRGFNQEEIANLFTKKEKR) are excised as a propeptide. The residue at position 143 (Ile143) is an Isoleucine amide.

Belongs to the bombinin family. As to expression, expressed by the skin glands.

The protein resides in the secreted. Functionally, maximin-2 shows antibacterial activity against both Gram-positive and Gram-negative bacteria. It also shows antimicrobial activity against the fungus C.albicans, but not against A.flavus nor P.uticale. It has little hemolytic activity. Its function is as follows. Maximin-H8 shows antimicrobial activity against bacteria and against the fungus C.albicans. Shows strong hemolytic activity. This is Maximins 2/H8 type 2 from Bombina maxima (Giant fire-bellied toad).